Reading from the N-terminus, the 437-residue chain is MAGLNDVPFIKGLAVPSVCALIIFLGYASQFLFNYSTTLEPGPPTRRETIIFNGLLLVLWITYYRTVATDPGRYIFKDRVIEAEGQRWCNKCAAPKPPRAHHCRHCARCVPRMDHHCPWTRNCVSMTTFPHFLRFLIYTNMSLWMLGYFLWQRFSKIWEHRRLPAYLGPSFYGLICLSLISIVNFVTTVALGIMLINTVKSWVFNQTMIEGWEQERHEALMDKGPKEWWDIMGPDGEKVRFERLEFPYDIGFFSNMAQAMGTHNVLLWFFPFAGNPTVAKDGNGQGWTWEENGFNRIEGLWPPPDPDKLRRAARGWPAGNRNYAEELRQANMSSSEYKAGFLKRQADDEKRKRHLMAELEEVDDFDMYDDEEYDRELDQGLGWVNSDGDRLRDYGVDEEASEPEGVNDDDDDDDDDDVPLAELIRRRKILKKDGLDD.

The Cytoplasmic portion of the chain corresponds to 1–12; sequence MAGLNDVPFIKG. The chain crosses the membrane as a helical span at residues 13-33; it reads LAVPSVCALIIFLGYASQFLF. Residues 34-48 are Lumenal-facing; that stretch reads NYSTTLEPGPPTRRE. A helical membrane pass occupies residues 49–69; it reads TIIFNGLLLVLWITYYRTVAT. The Cytoplasmic portion of the chain corresponds to 70–130; sequence DPGRYIFKDR…RNCVSMTTFP (61 aa). Positions 87-137 constitute a DHHC domain; that stretch reads RWCNKCAAPKPPRAHHCRHCARCVPRMDHHCPWTRNCVSMTTFPHFLRFLI. Cys117 serves as the catalytic S-palmitoyl cysteine intermediate. The chain crosses the membrane as a helical span at residues 131 to 151; sequence HFLRFLIYTNMSLWMLGYFLW. The Lumenal portion of the chain corresponds to 152-173; sequence QRFSKIWEHRRLPAYLGPSFYG. Residues 174–194 traverse the membrane as a helical segment; sequence LICLSLISIVNFVTTVALGIM. Residues 195 to 437 are Cytoplasmic-facing; sequence LINTVKSWVF…KILKKDGLDD (243 aa). Residues 377-419 are disordered; it reads LDQGLGWVNSDGDRLRDYGVDEEASEPEGVNDDDDDDDDDDVP. Residues 396–419 are compositionally biased toward acidic residues; that stretch reads VDEEASEPEGVNDDDDDDDDDDVP.

This sequence belongs to the DHHC palmitoyltransferase family. PFA4 subfamily.

The protein localises to the endoplasmic reticulum membrane. The catalysed reaction is L-cysteinyl-[protein] + hexadecanoyl-CoA = S-hexadecanoyl-L-cysteinyl-[protein] + CoA. Mediates the reversible addition of palmitate to target proteins, thereby regulating their membrane association and biological function. In Gibberella zeae (strain ATCC MYA-4620 / CBS 123657 / FGSC 9075 / NRRL 31084 / PH-1) (Wheat head blight fungus), this protein is Palmitoyltransferase PFA4.